The primary structure comprises 366 residues: UDP-N-acetylglucosamine--N-acetylmuramyl-(pentapeptide) pyrophosphoryl-undecaprenol N-acetylglucosamine transferase (366 aa).

Residues 17–19 (TGG), N129, R169, S195, I251, 270–275 (ALTVSE), and Q296 each bind UDP-N-acetyl-alpha-D-glucosamine.

The protein belongs to the glycosyltransferase 28 family. MurG subfamily.

The protein resides in the cell inner membrane. The enzyme catalyses di-trans,octa-cis-undecaprenyl diphospho-N-acetyl-alpha-D-muramoyl-L-alanyl-D-glutamyl-meso-2,6-diaminopimeloyl-D-alanyl-D-alanine + UDP-N-acetyl-alpha-D-glucosamine = di-trans,octa-cis-undecaprenyl diphospho-[N-acetyl-alpha-D-glucosaminyl-(1-&gt;4)]-N-acetyl-alpha-D-muramoyl-L-alanyl-D-glutamyl-meso-2,6-diaminopimeloyl-D-alanyl-D-alanine + UDP + H(+). It participates in cell wall biogenesis; peptidoglycan biosynthesis. Functionally, cell wall formation. Catalyzes the transfer of a GlcNAc subunit on undecaprenyl-pyrophosphoryl-MurNAc-pentapeptide (lipid intermediate I) to form undecaprenyl-pyrophosphoryl-MurNAc-(pentapeptide)GlcNAc (lipid intermediate II). This chain is UDP-N-acetylglucosamine--N-acetylmuramyl-(pentapeptide) pyrophosphoryl-undecaprenol N-acetylglucosamine transferase, found in Shewanella denitrificans (strain OS217 / ATCC BAA-1090 / DSM 15013).